Reading from the N-terminus, the 396-residue chain is Elongation factor Tu 2 (396 aa).

The 197-residue stretch at Lys-10–Glu-206 folds into the tr-type G domain. A G1 region spans residues Gly-19–Thr-26. Residue Gly-19–Thr-26 participates in GTP binding. Thr-26 contacts Mg(2+). The G2 stretch occupies residues Gly-60–Ser-64. The G3 stretch occupies residues Asp-81–Gly-84. GTP contacts are provided by residues Asp-81–His-85 and Asn-136–Asp-139. The tract at residues Asn-136–Asp-139 is G4. The G5 stretch occupies residues Ser-174 to Leu-176.

This sequence belongs to the TRAFAC class translation factor GTPase superfamily. Classic translation factor GTPase family. EF-Tu/EF-1A subfamily. In terms of assembly, monomer.

It is found in the cytoplasm. The catalysed reaction is GTP + H2O = GDP + phosphate + H(+). GTP hydrolase that promotes the GTP-dependent binding of aminoacyl-tRNA to the A-site of ribosomes during protein biosynthesis. The protein is Elongation factor Tu 2 of Rhodopseudomonas palustris (strain BisB5).